A 431-amino-acid chain; its full sequence is Trigger factor (431 aa).

The PPIase FKBP-type domain maps to 160-245 (DDRVTIDFVG…VKKVEVMVLP (86 aa)).

Belongs to the FKBP-type PPIase family. Tig subfamily.

The protein localises to the cytoplasm. It catalyses the reaction [protein]-peptidylproline (omega=180) = [protein]-peptidylproline (omega=0). Involved in protein export. Acts as a chaperone by maintaining the newly synthesized protein in an open conformation. Functions as a peptidyl-prolyl cis-trans isomerase. The polypeptide is Trigger factor (Mannheimia succiniciproducens (strain KCTC 0769BP / MBEL55E)).